A 301-amino-acid chain; its full sequence is Tyrosine recombinase XerD (301 aa).

A Core-binding (CB) domain is found at Q7–K90. Residues R109–L294 enclose the Tyr recombinase domain. Catalysis depends on residues R153, K175, H246, R249, and H272. The O-(3'-phospho-DNA)-tyrosine intermediate role is filled by Y281.

Belongs to the 'phage' integrase family. XerD subfamily. In terms of assembly, forms a cyclic heterotetrameric complex composed of two molecules of XerC and two molecules of XerD.

It localises to the cytoplasm. Functionally, site-specific tyrosine recombinase, which acts by catalyzing the cutting and rejoining of the recombining DNA molecules. The XerC-XerD complex is essential to convert dimers of the bacterial chromosome into monomers to permit their segregation at cell division. It also contributes to the segregational stability of plasmids. The chain is Tyrosine recombinase XerD from Chlamydia pneumoniae (Chlamydophila pneumoniae).